Here is an 81-residue protein sequence, read N- to C-terminus: uncharacterized protein (81 aa).

The next 2 membrane-spanning stretches (helical) occupy residues 1–21 (MTLF…FSLL) and 27–47 (IFIY…HHFF).

It localises to the membrane. This is an uncharacterized protein from Saccharomyces cerevisiae (strain ATCC 204508 / S288c) (Baker's yeast).